A 183-amino-acid polypeptide reads, in one-letter code: Large ribosomal subunit protein bL32m (183 aa).

Zn(2+) contacts are provided by Cys-99, Cys-102, Cys-112, and Cys-115.

Belongs to the bacterial ribosomal protein bL32 family. As to quaternary structure, component of the mitochondrial large ribosomal subunit (mt-LSU).

It localises to the mitochondrion. Component of the mitochondrial large ribosomal subunit (mt-LSU). The mitochondrial ribosome (mitoribosome) is a large ribonucleoprotein complex responsible for the synthesis of proteins inside mitochondria. In Caenorhabditis elegans, this protein is Large ribosomal subunit protein bL32m (mrpl-32).